Consider the following 377-residue polypeptide: Cell division cycle-associated protein 7 (377 aa).

Disordered regions lie at residues 58-113 and 144-211; these read RTRS…EEDG and IFSG…EEDK. The span at 76 to 100 shows a compositional bias: low complexity; that stretch reads PARNTRRAANTKAAPPKPSESSAND. The tract at residues 148 to 173 is interaction with MYC; the sequence is RHSLPGHRTKDSKSPRRRTFPGVASR. Residues 163 to 179 carry the Nuclear localization signal motif; the sequence is RRRTFPGVASRRNPERR. Residue Thr166 is modified to Phosphothreonine. Ser193 bears the Phosphoserine mark. Thr199 bears the Phosphothreonine mark. The segment covering 199 to 210 has biased composition (acidic residues); the sequence is TEEEEDEEEEED. Lys211 participates in a covalent cross-link: Glycyl lysine isopeptide (Lys-Gly) (interchain with G-Cter in SUMO2). Ser220 bears the Phosphoserine mark. The segment at 253 to 377 is mediates transcriptional activity; that stretch reads EEEIRNICSN…SLKQEFEMQA (125 aa).

In terms of assembly, interacts with MYC (via C-terminus), YWHAE and YWHAZ. Post-translationally, phosphorylation at Thr-166 promotes interaction with YWHAE and YWHAZ, dissociation from MYC and sequestration in the cytoplasm.

Its subcellular location is the nucleus. The protein resides in the cytoplasm. In terms of biological role, participates in MYC-mediated cell transformation and apoptosis; induces anchorage-independent growth and clonogenicity in lymphoblastoid cells. Insufficient to induce tumorigenicity when overexpressed but contributes to MYC-mediated tumorigenesis. May play a role as transcriptional regulator. The chain is Cell division cycle-associated protein 7 (Cdca7) from Rattus norvegicus (Rat).